Consider the following 343-residue polypeptide: uncharacterized protein (343 aa).

The protein belongs to the histone deacetylase family.

In terms of biological role, putative deacetylase. This is an uncharacterized protein from Methanocaldococcus jannaschii (strain ATCC 43067 / DSM 2661 / JAL-1 / JCM 10045 / NBRC 100440) (Methanococcus jannaschii).